A 169-amino-acid polypeptide reads, in one-letter code: Cytochrome c oxidase subunit 4 isoform 1, mitochondrial (169 aa).

The N-terminal 22 residues, Met1–Arg22, are a transit peptide targeting the mitochondrion. The Mitochondrial matrix segment spans residues Ala23–Asn98. Lys29 carries the N6-acetyllysine; alternate modification. Lys29 is subject to N6-succinyllysine; alternate. Residue Lys53 is modified to N6-acetyllysine. 2 positions are modified to phosphoserine: Ser56 and Ser58. Lys60 carries the post-translational modification N6-acetyllysine; alternate. Position 60 is an N6-succinyllysine; alternate (Lys60). An N6-acetyllysine modification is found at Lys67. Residues Glu99–Tyr124 traverse the membrane as a helical segment. Residues Val125–Lys169 are Mitochondrial intermembrane-facing.

This sequence belongs to the cytochrome c oxidase IV family. In terms of assembly, component of the cytochrome c oxidase (complex IV, CIV), a multisubunit enzyme composed of 14 subunits. The complex is composed of a catalytic core of 3 subunits MT-CO1, MT-CO2 and MT-CO3, encoded in the mitochondrial DNA, and 11 supernumerary subunits COX4I1 (or COX4I2), COX5A, COX5B, COX6A2 (or COX6A1), COX6B1 (or COX6B2), COX6C, COX7A1 (or COX7A2), COX7B, COX7C, COX8B and NDUFA4, which are encoded in the nuclear genome. The complex exists as a monomer or a dimer and forms supercomplexes (SCs) in the inner mitochondrial membrane with NADH-ubiquinone oxidoreductase (complex I, CI) and ubiquinol-cytochrome c oxidoreductase (cytochrome b-c1 complex, complex III, CIII), resulting in different assemblies (supercomplex SCI(1)III(2)IV(1) and megacomplex MCI(2)III(2)IV(2)). Interacts with PHB2; the interaction decreases in absence of SPHK2. Interacts with AFG1L. Interacts with ABCB7; this interaction allows the regulation of cellular iron homeostasis and cellular reactive oxygen species (ROS) levels in cardiomyocytes. Interacts with FLVCR2; this interaction occurs in the absence of heme and is disrupted upon heme binding. Interacts with IRGC.

It localises to the mitochondrion inner membrane. Its pathway is energy metabolism; oxidative phosphorylation. In terms of biological role, component of the cytochrome c oxidase, the last enzyme in the mitochondrial electron transport chain which drives oxidative phosphorylation. The respiratory chain contains 3 multisubunit complexes succinate dehydrogenase (complex II, CII), ubiquinol-cytochrome c oxidoreductase (cytochrome b-c1 complex, complex III, CIII) and cytochrome c oxidase (complex IV, CIV), that cooperate to transfer electrons derived from NADH and succinate to molecular oxygen, creating an electrochemical gradient over the inner membrane that drives transmembrane transport and the ATP synthase. Cytochrome c oxidase is the component of the respiratory chain that catalyzes the reduction of oxygen to water. Electrons originating from reduced cytochrome c in the intermembrane space (IMS) are transferred via the dinuclear copper A center (CU(A)) of subunit 2 and heme A of subunit 1 to the active site in subunit 1, a binuclear center (BNC) formed by heme A3 and copper B (CU(B)). The BNC reduces molecular oxygen to 2 water molecules using 4 electrons from cytochrome c in the IMS and 4 protons from the mitochondrial matrix. This is Cytochrome c oxidase subunit 4 isoform 1, mitochondrial (COX4I1) from Bos taurus (Bovine).